A 564-amino-acid polypeptide reads, in one-letter code: E3 ubiquitin-protein ligase hrd-like protein 1 (564 aa).

A helical transmembrane segment spans residues 17-37 (SYLALSVLVAIVASVTVFTTF). An N-linked (GlcNAc...) asparagine glycan is attached at Asn53. The next 7 membrane-spanning stretches (helical) occupy residues 61–81 (YGLN…HYIL), 86–106 (LIWV…RLII), 123–143 (QAFF…IGPQ), 148–168 (VMPW…QFIT), 185–205 (KISF…FLIS), 215–235 (PAVL…YILF), and 272–292 (LSFA…IFFL). The RING-type; atypical zinc-finger motif lies at 335–373 (CVVCWELLGTSRRLPCSHQFHDWCLMWWLAQDSSCPTCR). The 43-residue stretch at 432 to 474 (QLQTMLEQVREMFPQMSVDIIMTDLRQSGSAQSTIENILEGRI) folds into the CUE domain.

Its subcellular location is the membrane. Proposed to have a role in neuroprotection. The protein is E3 ubiquitin-protein ligase hrd-like protein 1 (hrdl-1) of Caenorhabditis elegans.